The primary structure comprises 217 residues: Peptide methionine sulfoxide reductase MsrA (217 aa).

Cys-56 is a catalytic residue.

This sequence belongs to the MsrA Met sulfoxide reductase family.

The enzyme catalyses L-methionyl-[protein] + [thioredoxin]-disulfide + H2O = L-methionyl-(S)-S-oxide-[protein] + [thioredoxin]-dithiol. It catalyses the reaction [thioredoxin]-disulfide + L-methionine + H2O = L-methionine (S)-S-oxide + [thioredoxin]-dithiol. Its function is as follows. Has an important function as a repair enzyme for proteins that have been inactivated by oxidation. Catalyzes the reversible oxidation-reduction of methionine sulfoxide in proteins to methionine. This is Peptide methionine sulfoxide reductase MsrA from Corynebacterium glutamicum (strain R).